The following is a 232-amino-acid chain: Ribonuclease 3 (232 aa).

Positions 7–136 constitute an RNase III domain; it reads AALLEDTIDY…LLGAVFCDGG (130 aa). Glu49 is a Mg(2+) binding site. Residue Asp53 is part of the active site. Asn122 and Glu125 together coordinate Mg(2+). The active site involves Glu125. Residues 163–232 enclose the DRBM domain; it reads DYKTRLQERL…AKQALEYLEE (70 aa).

This sequence belongs to the ribonuclease III family. In terms of assembly, homodimer. Mg(2+) is required as a cofactor.

The protein resides in the cytoplasm. The enzyme catalyses Endonucleolytic cleavage to 5'-phosphomonoester.. Functionally, digests double-stranded RNA. Involved in the processing of primary rRNA transcript to yield the immediate precursors to the large and small rRNAs (23S and 16S). Processes some mRNAs, and tRNAs when they are encoded in the rRNA operon. Processes pre-crRNA and tracrRNA of type II CRISPR loci if present in the organism. This is Ribonuclease 3 from Syntrophotalea carbinolica (strain DSM 2380 / NBRC 103641 / GraBd1) (Pelobacter carbinolicus).